Here is a 197-residue protein sequence, read N- to C-terminus: Recombination protein RecR (197 aa).

The C4-type zinc-finger motif lies at 54–69 (CQQCNNYTEQTLCTLC). The region spanning 77–172 (TLLCVVESPA…NISQLAHGIP (96 aa)) is the Toprim domain.

It belongs to the RecR family.

Its function is as follows. May play a role in DNA repair. It seems to be involved in an RecBC-independent recombinational process of DNA repair. It may act with RecF and RecO. This Legionella pneumophila (strain Paris) protein is Recombination protein RecR.